The following is an 802-amino-acid chain: Ribosomal protein S6 kinase alpha-5 (802 aa).

A compositionally biased stretch (gly residues) spans 1–22 (MEEEGGSSGGAAGTSADGGDGG). The segment at 1–23 (MEEEGGSSGGAAGTSADGGDGGE) is disordered. In terms of domain architecture, Protein kinase 1 spans 49-318 (FELLKVLGTG…ADEIKEHLFF (270 aa)). ATP is bound by residues 55-63 (LGTGAYGKV) and lysine 81. The Proton acceptor role is filled by aspartate 177. A Phosphoserine; by autocatalysis modification is found at serine 212. The region spanning 319–387 (QKINWDDLAA…VAPSILFKRN (69 aa)) is the AGC-kinase C-terminal domain. At serine 360 the chain carries Phosphoserine; by MAPK1, MAPK3 and MAPK14. Phosphoserine; by autocatalysis is present on residues serine 376 and serine 381. The Protein kinase 2 domain maps to 426-687 (DLKDKPLGEG…MSGLRYNEWL (262 aa)). ATP contacts are provided by residues 432–440 (LGEGSFSIC) and lysine 455. The active-site Proton acceptor is the aspartate 544. Threonine 581 bears the Phosphothreonine; by MAPK1, MAPK3 and MAPK14 mark. Residues serine 647, serine 657, serine 691, and serine 695 each carry the phosphoserine modification. The residue at position 700 (threonine 700) is a Phosphothreonine; by MAPK1, MAPK3 and MAPK14. Residues 741-802 (AKRRKMKKTS…TLFQFSDSVA (62 aa)) are disordered. Positions 749-779 (TSTSTETRSSSSESSHSSSSHSHGKTTPTKT) are enriched in low complexity. Serine 750, serine 752, and serine 758 each carry phosphoserine; by autocatalysis. Over residues 780–802 (LQPSNPADSNNPETLFQFSDSVA) the composition is skewed to polar residues. Serine 798 carries the phosphoserine modification.

This sequence belongs to the protein kinase superfamily. AGC Ser/Thr protein kinase family. S6 kinase subfamily. Forms a complex with either MAPK1/ERK2 or MAPK3/ERK1 in quiescent cells which transiently dissociates following mitogenic stimulation. Also associates with MAPK14/p38-alpha. Activated RPS6KA5 associates with and phosphorylates the NF-kappa-B p65 subunit RELA. Interacts with CREBBP and EP300. Requires Mg(2+) as cofactor. In terms of processing, ser-376 and Thr-581 phosphorylation is required for kinase activity. Ser-376 and Ser-212 are autophosphorylated by the C-terminal kinase domain, and their phosphorylation is essential for the catalytic activity of the N-terminal kinase domain. Phosphorylated at Ser-360, Thr-581 and Thr-700 by MAPK1/ERK2, MAPK3/ERK1 and MAPK14/p38-alpha. Autophosphorylated at Ser-750, Ser-752 and Ser-758 by the N-terminal kinase domain. Post-translationally, ubiquitinated. In terms of tissue distribution, widely expressed with high levels in heart, brain and placenta. Less abundant in lung, kidney and liver.

The protein resides in the nucleus. It is found in the cytoplasm. The enzyme catalyses L-seryl-[protein] + ATP = O-phospho-L-seryl-[protein] + ADP + H(+). It catalyses the reaction L-threonyl-[protein] + ATP = O-phospho-L-threonyl-[protein] + ADP + H(+). With respect to regulation, activated by phosphorylation at Ser-360, Thr-581 and Thr-700 by MAPK1/ERK2, MAPK3/ERK1 and MAPK14/p38-alpha, and by further autophosphorylation of Ser-212, Ser-376 and Ser-381 by the activated C-terminal kinase domain. The active N-terminal kinase domain finally phosphorylates downstream substrates, as well as Ser-750, Ser-752 and Ser-758 in its own C-terminal region. Its function is as follows. Serine/threonine-protein kinase that is required for the mitogen or stress-induced phosphorylation of the transcription factors CREB1 and ATF1 and for the regulation of the transcription factors RELA, STAT3 and ETV1/ER81, and that contributes to gene activation by histone phosphorylation and functions in the regulation of inflammatory genes. Phosphorylates CREB1 and ATF1 in response to mitogenic or stress stimuli such as UV-C irradiation, epidermal growth factor (EGF) and anisomycin. Plays an essential role in the control of RELA transcriptional activity in response to TNF and upon glucocorticoid, associates in the cytoplasm with the glucocorticoid receptor NR3C1 and contributes to RELA inhibition and repression of inflammatory gene expression. In skeletal myoblasts is required for phosphorylation of RELA at 'Ser-276' during oxidative stress. In erythropoietin-stimulated cells, is necessary for the 'Ser-727' phosphorylation of STAT3 and regulation of its transcriptional potential. Phosphorylates ETV1/ER81 at 'Ser-191' and 'Ser-216', and thereby regulates its ability to stimulate transcription, which may be important during development and breast tumor formation. Directly represses transcription via phosphorylation of 'Ser-1' of histone H2A. Phosphorylates 'Ser-10' of histone H3 in response to mitogenics, stress stimuli and EGF, which results in the transcriptional activation of several immediate early genes, including proto-oncogenes c-fos/FOS and c-jun/JUN. May also phosphorylate 'Ser-28' of histone H3. Mediates the mitogen- and stress-induced phosphorylation of high mobility group protein 1 (HMGN1/HMG14). In lipopolysaccharide-stimulated primary macrophages, acts downstream of the Toll-like receptor TLR4 to limit the production of pro-inflammatory cytokines. Functions probably by inducing transcription of the MAP kinase phosphatase DUSP1 and the anti-inflammatory cytokine interleukin 10 (IL10), via CREB1 and ATF1 transcription factors. Plays a role in neuronal cell death by mediating the downstream effects of excitotoxic injury. Phosphorylates TRIM7 at 'Ser-107' in response to growth factor signaling via the MEK/ERK pathway, thereby stimulating its ubiquitin ligase activity. The sequence is that of Ribosomal protein S6 kinase alpha-5 (RPS6KA5) from Homo sapiens (Human).